Reading from the N-terminus, the 132-residue chain is Small ribosomal subunit protein uS8 (132 aa).

The protein belongs to the universal ribosomal protein uS8 family. As to quaternary structure, part of the 30S ribosomal subunit. Contacts proteins S5 and S12.

One of the primary rRNA binding proteins, it binds directly to 16S rRNA central domain where it helps coordinate assembly of the platform of the 30S subunit. The sequence is that of Small ribosomal subunit protein uS8 from Mycoplasmopsis synoviae (strain 53) (Mycoplasma synoviae).